Here is a 175-residue protein sequence, read N- to C-terminus: Large ribosomal subunit protein uL10 (175 aa).

The protein belongs to the universal ribosomal protein uL10 family. As to quaternary structure, part of the ribosomal stalk of the 50S ribosomal subunit. The N-terminus interacts with L11 and the large rRNA to form the base of the stalk. The C-terminus forms an elongated spine to which L12 dimers bind in a sequential fashion forming a multimeric L10(L12)X complex.

Its function is as follows. Forms part of the ribosomal stalk, playing a central role in the interaction of the ribosome with GTP-bound translation factors. This is Large ribosomal subunit protein uL10 from Alkalilimnicola ehrlichii (strain ATCC BAA-1101 / DSM 17681 / MLHE-1).